Here is a 133-residue protein sequence, read N- to C-terminus: Interleukin-5 (133 aa).

Positions 1-20 are cleaved as a signal peptide; the sequence is MRRMLLHLSVLTLSCVWATA. N-linked (GlcNAc...) asparagine glycans are attached at residues asparagine 46, asparagine 75, and asparagine 89.

It belongs to the IL-5 family. In terms of assembly, homodimer; disulfide-linked. Interacts with IL5RA. Interacts with CSF2RB. As to expression, expressed in lymphoid cells, including spleen, thymus, lymph nodes and peripheral blood mononuclear cells.

The protein localises to the secreted. In terms of biological role, homodimeric cytokine expressed predominantly by T-lymphocytes and NK cells that plays an important role in the survival, differentiation, and chemotaxis of eosinophils. Also acts on activated and resting B-cells to induce immunoglobulin production, growth, and differentiation. Mechanistically, exerts its biological effects through a receptor composed of IL5RA subunit and the cytokine receptor common subunit beta/CSF2RB. Binding to the receptor leads to activation of various kinases including LYN, SYK and JAK2 and thereby propagates signals through the RAS-MAPK and JAK-STAT5 pathways respectively. In Mus musculus (Mouse), this protein is Interleukin-5 (Il5).